A 233-amino-acid polypeptide reads, in one-letter code: Cytidylate kinase (233 aa).

15-23 is an ATP binding site; it reads GPSGAGKSS.

The protein belongs to the cytidylate kinase family. Type 1 subfamily.

It localises to the cytoplasm. The catalysed reaction is CMP + ATP = CDP + ADP. It carries out the reaction dCMP + ATP = dCDP + ADP. This chain is Cytidylate kinase, found in Citrifermentans bemidjiense (strain ATCC BAA-1014 / DSM 16622 / JCM 12645 / Bem) (Geobacter bemidjiensis).